We begin with the raw amino-acid sequence, 194 residues long: Phosphoheptose isomerase (194 aa).

The SIS domain maps to Ile-31 to Ala-186. Asn-46–Gly-48 lines the substrate pocket. Zn(2+)-binding residues include His-55 and Glu-59. Substrate is bound by residues Glu-59, Asn-88–Asp-89, Ser-114–Ser-116, Ser-119, and Gln-166. Zn(2+)-binding residues include Gln-166 and His-174.

Belongs to the SIS family. GmhA subfamily. The cofactor is Zn(2+).

The protein resides in the cytoplasm. It catalyses the reaction 2 D-sedoheptulose 7-phosphate = D-glycero-alpha-D-manno-heptose 7-phosphate + D-glycero-beta-D-manno-heptose 7-phosphate. It functions in the pathway carbohydrate biosynthesis; D-glycero-D-manno-heptose 7-phosphate biosynthesis; D-glycero-alpha-D-manno-heptose 7-phosphate and D-glycero-beta-D-manno-heptose 7-phosphate from sedoheptulose 7-phosphate: step 1/1. Its function is as follows. Catalyzes the isomerization of sedoheptulose 7-phosphate in D-glycero-D-manno-heptose 7-phosphate. This chain is Phosphoheptose isomerase, found in Synechocystis sp. (strain ATCC 27184 / PCC 6803 / Kazusa).